A 660-amino-acid chain; its full sequence is Acetyl-coenzyme A synthetase (660 aa).

CoA contacts are provided by residues 197–200 (RGGK) and T317. ATP is bound by residues 397 to 399 (GEP), 421 to 426 (DTFWQT), D512, and R528. S536 lines the CoA pocket. Position 539 (R539) interacts with ATP. Mg(2+)-binding residues include V550 and V555. Residue K625 is modified to N6-acetyllysine.

It belongs to the ATP-dependent AMP-binding enzyme family. The cofactor is Mg(2+). Acetylated. Deacetylation by the SIR2-homolog deacetylase activates the enzyme.

It catalyses the reaction acetate + ATP + CoA = acetyl-CoA + AMP + diphosphate. Catalyzes the conversion of acetate into acetyl-CoA (AcCoA), an essential intermediate at the junction of anabolic and catabolic pathways. AcsA undergoes a two-step reaction. In the first half reaction, AcsA combines acetate with ATP to form acetyl-adenylate (AcAMP) intermediate. In the second half reaction, it can then transfer the acetyl group from AcAMP to the sulfhydryl group of CoA, forming the product AcCoA. The chain is Acetyl-coenzyme A synthetase from Cupriavidus taiwanensis (strain DSM 17343 / BCRC 17206 / CCUG 44338 / CIP 107171 / LMG 19424 / R1) (Ralstonia taiwanensis (strain LMG 19424)).